We begin with the raw amino-acid sequence, 274 residues long: 4-deoxy-L-threo-5-hexosulose-uronate ketol-isomerase (274 aa).

Zn(2+)-binding residues include histidine 192, histidine 194, glutamate 199, and histidine 241.

The protein belongs to the KduI family. Zn(2+) is required as a cofactor.

The enzyme catalyses 5-dehydro-4-deoxy-D-glucuronate = 3-deoxy-D-glycero-2,5-hexodiulosonate. It functions in the pathway glycan metabolism; pectin degradation; 2-dehydro-3-deoxy-D-gluconate from pectin: step 4/5. Functionally, catalyzes the isomerization of 5-dehydro-4-deoxy-D-glucuronate to 3-deoxy-D-glycero-2,5-hexodiulosonate. The sequence is that of 4-deoxy-L-threo-5-hexosulose-uronate ketol-isomerase from Cereibacter sphaeroides (strain ATCC 17025 / ATH 2.4.3) (Rhodobacter sphaeroides).